The sequence spans 627 residues: Xaa-Pro aminopeptidase 1 (627 aa).

A peptide-binding residues include Arg-88 and His-405. The Mn(2+) site is built by Asp-424, Asp-435, and His-498. Positions 498, 507, and 533 each coordinate a peptide. Residues Glu-533 and Glu-547 each coordinate Mn(2+).

The protein belongs to the peptidase M24B family. In terms of assembly, homodimer. Requires Mn(2+) as cofactor.

The protein resides in the cytoplasm. It is found in the cytosol. It carries out the reaction Release of any N-terminal amino acid, including proline, that is linked to proline, even from a dipeptide or tripeptide.. In terms of biological role, metalloaminopeptidase that catalyzes the removal of a penultimate prolyl residue from the N-termini of peptides, such as Arg-Pro-Pro. The chain is Xaa-Pro aminopeptidase 1 (xpnpep1) from Dictyostelium discoideum (Social amoeba).